The sequence spans 352 residues: Maleylacetate reductase (352 aa).

Belongs to the iron-containing alcohol dehydrogenase family.

The catalysed reaction is 3-oxoadipate + NAD(+) = maleylacetate + NADH + H(+). It carries out the reaction 3-oxoadipate + NADP(+) = maleylacetate + NADPH + H(+). It functions in the pathway aromatic compound metabolism; 3-chlorocatechol degradation. This Pseudomonas knackmussii (strain DSM 6978 / CCUG 54928 / LMG 23759 / B13) protein is Maleylacetate reductase (clcE).